We begin with the raw amino-acid sequence, 556 residues long: Glutamine--tRNA ligase (556 aa).

The short motif at 34-44 (PEPNGFLHIGH) is the 'HIGH' region element. Residues 35 to 37 (EPN) and 41 to 47 (HIGHAKA) contribute to the ATP site. 2 residues coordinate L-glutamine: D67 and Y212. Residues T231, 261–262 (RL), and 269–271 (MSK) contribute to the ATP site. Positions 268 to 272 (LMSKR) match the 'KMSKS' region motif.

Belongs to the class-I aminoacyl-tRNA synthetase family. As to quaternary structure, monomer.

Its subcellular location is the cytoplasm. It carries out the reaction tRNA(Gln) + L-glutamine + ATP = L-glutaminyl-tRNA(Gln) + AMP + diphosphate. In Colwellia psychrerythraea (strain 34H / ATCC BAA-681) (Vibrio psychroerythus), this protein is Glutamine--tRNA ligase.